Here is a 192-residue protein sequence, read N- to C-terminus: ATP-dependent Clp protease proteolytic subunit 1 (192 aa).

Serine 92 (nucleophile) is an active-site residue. Histidine 117 is an active-site residue.

It belongs to the peptidase S14 family. Fourteen ClpP subunits assemble into 2 heptameric rings which stack back to back to give a disk-like structure with a central cavity, resembling the structure of eukaryotic proteasomes.

It is found in the cytoplasm. It catalyses the reaction Hydrolysis of proteins to small peptides in the presence of ATP and magnesium. alpha-casein is the usual test substrate. In the absence of ATP, only oligopeptides shorter than five residues are hydrolyzed (such as succinyl-Leu-Tyr-|-NHMec, and Leu-Tyr-Leu-|-Tyr-Trp, in which cleavage of the -Tyr-|-Leu- and -Tyr-|-Trp bonds also occurs).. Its function is as follows. Cleaves peptides in various proteins in a process that requires ATP hydrolysis. Has a chymotrypsin-like activity. Plays a major role in the degradation of misfolded proteins. In Chlamydia trachomatis serovar D (strain ATCC VR-885 / DSM 19411 / UW-3/Cx), this protein is ATP-dependent Clp protease proteolytic subunit 1.